The primary structure comprises 343 residues: Ribosomal RNA small subunit methyltransferase C (343 aa).

It belongs to the methyltransferase superfamily. RsmC family. In terms of assembly, monomer.

The protein resides in the cytoplasm. It carries out the reaction guanosine(1207) in 16S rRNA + S-adenosyl-L-methionine = N(2)-methylguanosine(1207) in 16S rRNA + S-adenosyl-L-homocysteine + H(+). Its function is as follows. Specifically methylates the guanine in position 1207 of 16S rRNA in the 30S particle. The chain is Ribosomal RNA small subunit methyltransferase C from Escherichia coli (strain K12 / DH10B).